The primary structure comprises 1431 residues: Zinc finger protein 687b (1431 aa).

Disordered stretches follow at residues 24 to 481 and 504 to 538; these read KEAI…RPLK and KGGA…TTAG. Over residues 61–73 the composition is skewed to low complexity; that stretch reads SPSPSTDSQSDPS. The span at 103–122 shows a compositional bias: polar residues; that stretch reads GFVSSGGSVHMSQSRGQPNG. Composition is skewed to low complexity over residues 174 to 188, 196 to 209, and 217 to 248; these read MQLL…EMNL, APAN…AASP, and LLST…ASSP. Over residues 249–267 the composition is skewed to polar residues; sequence LATSLTEPFNGTPRLSSSA. Low complexity predominate over residues 311 to 324; sequence SQSPSIPPSTSISP. Residues 342 to 359 are compositionally biased toward polar residues; the sequence is RAQQNWLSTAAQTGNGKS. The span at 361–377 shows a compositional bias: basic and acidic residues; sequence PQEERNPEHVIEERDSP. The segment covering 385–410 has biased composition (low complexity); the sequence is PKSSMPTSAVTKRSCSPAAASSPSAA. The span at 438-449 shows a compositional bias: basic and acidic residues; the sequence is DGGKGDTDKIEV. The segment covering 519–528 has biased composition (gly residues); the sequence is QTGGRAGPVK. The C2H2-type 1; degenerate zinc finger occupies 674 to 692; that stretch reads YRCLECGDSFALERSLARH. The tract at residues 754–816 is disordered; the sequence is TTPIGMLSPS…GPQSPQALMP (63 aa). Residues 760 to 775 show a composition bias toward low complexity; the sequence is LSPSLSSPPLTSSTTP. Polar residues predominate over residues 781 to 802; the sequence is APSTSSPLKDSPSPGTASTQPS. The segment at 830 to 853 adopts a C2H2-type 2; degenerate zinc-finger fold; that stretch reads FKCPECQAQFLSKAELVTHFQQIR. 4 consecutive C2H2-type zinc fingers follow at residues 919–942, 947–970, 982–1004, and 1013–1036; these read YRCS…QTAH, HKCP…TSQH, YKCV…FDTH, and FKCP…KTAH. The tract at residues 1041-1120 is disordered; the sequence is VKAETPPTTS…QVSSPESGNM (80 aa). Positions 1043–1057 are enriched in low complexity; that stretch reads AETPPTTSSPVSAPA. The span at 1058–1075 shows a compositional bias: polar residues; that stretch reads GNSTSKPKPATENNSDEL. Residues 1080–1111 are compositionally biased toward acidic residues; that stretch reads GEEEEEGEDEEGEQEGEEREDEEEEENEEEEQ. A C2H2-type 7 zinc finger spans residues 1122–1145; the sequence is WRCKECKKRFPEREDYIDHMKNEH. The C2H2-type 8; degenerate zinc finger occupies 1205–1227; it reads WHCSEGKRTFSSRLILEKHIRVR. Residues 1225-1310 form a disordered region; it reads RVRHGIRSRQ…EEEDGTFRCT (86 aa). 2 consecutive C2H2-type zinc fingers follow at residues 1307 to 1329 and 1337 to 1360; these read FRCT…IPVH and QQCL…FITH. The tract at residues 1362–1392 is disordered; that stretch reads LRQGQHDRNASPGASPQYGSPSSPKAGEDGD. Positions 1373-1384 are enriched in polar residues; the sequence is PGASPQYGSPSS. The C2H2-type 11 zinc-finger motif lies at 1395–1425; the sequence is VSCRVCGRRFDKASDLNTHFRTHGMAFITAH.

The protein belongs to the krueppel C2H2-type zinc-finger protein family. Widely expressed with highest levels in eye, spleen and ovary.

Its subcellular location is the nucleus. Functionally, may be involved in transcriptional regulation. This Danio rerio (Zebrafish) protein is Zinc finger protein 687b (znf687b).